Reading from the N-terminus, the 479-residue chain is MQNFEIIIGVENHVELKTNSKMFSPSKVSYGQTPNTLANEIDLAYPGTLPSVNKKGVELAILACNALNMQIDTLLTFDRKNYFYPDLTKGFQITQQFNPIGKNGSLEIILENGNKKVIEIERLHIEEDTAKQVHKDNLTYLDYNRSGVGLIEIVTKPVLRSAEEACLYVEKLREILLFLNVSDVKMNEGSLRTDLNISLRPYGSDKFSNKVEIKNLNSISNIKKAVEFEINRQKEILLKNQIVEQQTRRFDDQTSSTILMRSKIDSIDYRYFREPNIFPIQLDQKWVDQIISNSPELADQKRIRYVNELGLTSEDANIILTSLEMTNFFEKTIKLTTNYNKVAKMLISEIQAKLNLENKTIDQIKLSPENLASVINLIDKNIISSKQTKVVMPIILDSNTETVEQIVERLNLKLITNKDEISKLLVNIINQNKELLNQYSTRPERVIKTIMGQLMKQTNGNVDPEIANEIVIKEIEKNL.

It belongs to the GatB/GatE family. GatB subfamily. In terms of assembly, heterotrimer of A, B and C subunits.

It carries out the reaction L-glutamyl-tRNA(Gln) + L-glutamine + ATP + H2O = L-glutaminyl-tRNA(Gln) + L-glutamate + ADP + phosphate + H(+). It catalyses the reaction L-aspartyl-tRNA(Asn) + L-glutamine + ATP + H2O = L-asparaginyl-tRNA(Asn) + L-glutamate + ADP + phosphate + 2 H(+). Allows the formation of correctly charged Asn-tRNA(Asn) or Gln-tRNA(Gln) through the transamidation of misacylated Asp-tRNA(Asn) or Glu-tRNA(Gln) in organisms which lack either or both of asparaginyl-tRNA or glutaminyl-tRNA synthetases. The reaction takes place in the presence of glutamine and ATP through an activated phospho-Asp-tRNA(Asn) or phospho-Glu-tRNA(Gln). This chain is Aspartyl/glutamyl-tRNA(Asn/Gln) amidotransferase subunit B, found in Mycoplasma mycoides subsp. mycoides SC (strain CCUG 32753 / NCTC 10114 / PG1).